The chain runs to 963 residues: Spliceosome associated factor 3, U4/U6 recycling protein (963 aa).

Positions 1 to 11 (MATAAATSASE) are enriched in low complexity. 2 disordered regions span residues 1–36 (MATAAATSASEPEAESKAGPKADGEEDEVKAARTRR) and 49–86 (KTMGPGWDQQEEGVSESDGDEYAMASSAESSPGEYEWE). Residue Ala-2 is modified to N-acetylalanine. Residues 2 to 351 (ATAAATSASE…LVPDLWIRYS (350 aa)) are mediates interaction with PRPF3. Phosphoserine is present on residues Ser-10 and Ser-16. The span at 14–23 (AESKAGPKAD) shows a compositional bias: basic and acidic residues. Residues 21–46 (KADGEEDEVKAARTRRKVLSRAVAAA) adopt a coiled-coil conformation. Acidic residues predominate over residues 57–69 (QQEEGVSESDGDE). Residues 82 to 110 (EYEWEYDEEEEKNQLEIERLEEQLSINVY) adopt a coiled-coil conformation. 8 HAT repeats span residues 126 to 158 (GELTKVRMARQKMSEIFPLTEELWLEWLHDEIS), 164 to 195 (LDREHVYDLFEKAVKDYICPNIWLEYGQYSVG), 201 to 237 (GGLEKVRSVFERALSSVGLHMSKGLALWEAYREFESA), 242 to 275 (ARLEKVHSLFRRQLAIPLYDMEATFAEYEEWSED), 324 to 356 (GDPARIQLIFERALVENCLVPDLWIRYSQYLDR), 359 to 391 (KVKDLVLSVHNRAIRNCPWTVALWSRYLLAMER), 394 to 430 (VDHQVISVTFEKALNAGFIQATDYVEIWQAYLDYLRR), and 487 to 520 (NNMQKARELWDSIMTRGNAKYANMWLEYYNLERA). Ser-215 carries the phosphoserine modification. Positions 487 to 520 (NNMQKARELWDSIMTRGNAKYANMWLEYYNLERA) are required for interaction with USP4. Residues 537–953 (CTSDYPEHVC…AATEAPKMSN (417 aa)) form a necessary and sufficient for U6 snRNA binding region. Positions 559-619 (LEDWDIAVQK…ALKKKKKIRG (61 aa)) form a coiled coil. Residues 600–670 (QRKRARAEKK…EVAPGPAGKC (71 aa)) form a required for nuclear localization region. Residues 601 to 608 (RKRARAEK) carry the Nuclear localization signal motif. Residues 608 to 619 (KKALKKKKKIRG) are compositionally biased toward basic and acidic residues. Residues 608–712 (KKALKKKKKI…SITVFVSNLP (105 aa)) are disordered. Basic residues predominate over residues 620-635 (PEKRGADEDDEKEWGD). Residues 644-657 (RRRVENSIPAAGET) are compositionally biased toward acidic residues. Ser-650 carries the post-translational modification Phosphoserine. Thr-657 is modified (phosphothreonine). The span at 695–712 (VLHDSSKDSITVFVSNLP) shows a compositional bias: basic and acidic residues. Residues 704 to 782 (ITVFVSNLPY…RPMFVSPCVD (79 aa)) enclose the RRM 1 domain. Phosphoserine occurs at positions 769, 795, and 852. The RRM 2 domain maps to 801–878 (HKLFISGLPF…NVIKVAISNP (78 aa)). Over residues 900–909 (PQTYGARGKG) the composition is skewed to basic and acidic residues. Arg-906 bears the Omega-N-methylarginine mark.

In terms of assembly, component of the 7SK snRNP complex at least composed of P-TEFb (composed of CDK9 and CCNT1/cyclin-T1), HEXIM1, HEXIM2, BCDIN3, SART3 proteins and 7SK and U6 snRNAs. Interacts with AGO1 and AGO2. Interacts with PRPF3 and USP4; the interaction with PRPF3 is direct and recruits USP4 to its substrate PRPF3. Interacts with USP15; the interaction is direct.

It is found in the nucleus. The protein resides in the nucleoplasm. The protein localises to the cajal body. Its subcellular location is the nucleus speckle. It localises to the cytoplasm. U6 snRNP-binding protein that functions as a recycling factor of the splicing machinery. Promotes the initial reassembly of U4 and U6 snRNPs following their ejection from the spliceosome during its maturation. Also binds U6atac snRNPs and may function as a recycling factor for U4atac/U6atac spliceosomal snRNP, an initial step in the assembly of U12-type spliceosomal complex. The U12-type spliceosomal complex plays a role in the splicing of introns with non-canonical splice sites. May also function as a substrate-targeting factor for deubiquitinases like USP4 and USP15. Recruits USP4 to ubiquitinated PRPF3 within the U4/U5/U6 tri-snRNP complex, promoting PRPF3 deubiquitination and thereby regulating the spliceosome U4/U5/U6 tri-snRNP spliceosomal complex disassembly. May also recruit the deubiquitinase USP15 to histone H2B and mediate histone deubiquitination, thereby regulating gene expression and/or DNA repair. May play a role in hematopoiesis probably through transcription regulation of specific genes including MYC. In Pongo abelii (Sumatran orangutan), this protein is Spliceosome associated factor 3, U4/U6 recycling protein.